The sequence spans 463 residues: ATP synthase subunit beta (463 aa).

Position 152–159 (152–159 (GGAGVGKT)) interacts with ATP.

It belongs to the ATPase alpha/beta chains family. As to quaternary structure, F-type ATPases have 2 components, CF(1) - the catalytic core - and CF(0) - the membrane proton channel. CF(1) has five subunits: alpha(3), beta(3), gamma(1), delta(1), epsilon(1). CF(0) has three main subunits: a(1), b(2) and c(9-12). The alpha and beta chains form an alternating ring which encloses part of the gamma chain. CF(1) is attached to CF(0) by a central stalk formed by the gamma and epsilon chains, while a peripheral stalk is formed by the delta and b chains.

It localises to the cell inner membrane. The catalysed reaction is ATP + H2O + 4 H(+)(in) = ADP + phosphate + 5 H(+)(out). In terms of biological role, produces ATP from ADP in the presence of a proton gradient across the membrane. The catalytic sites are hosted primarily by the beta subunits. This is ATP synthase subunit beta from Shewanella putrefaciens (strain CN-32 / ATCC BAA-453).